A 511-amino-acid polypeptide reads, in one-letter code: Apolipoprotein N-acyltransferase (511 aa).

A run of 6 helical transmembrane segments spans residues 7 to 29 (PGWP…LAPF), 58 to 78 (GWWY…VSIH), 90 to 110 (LLML…AWLW), 125 to 145 (LAFA…LTGF), 163 to 183 (VPVG…ALLV), and 192 to 212 (GASL…GLYL). Residues 230–470 (IQGNIAQELK…QGILRGEVIP (241 aa)) form the CN hydrolase domain. The active-site Proton acceptor is the glutamate 269. Lysine 330 is an active-site residue. Cysteine 382 functions as the Nucleophile in the catalytic mechanism. Residues 482 to 502 (VWPLAGLAGVLLLWALLGRQL) form a helical membrane-spanning segment.

The protein belongs to the CN hydrolase family. Apolipoprotein N-acyltransferase subfamily.

It localises to the cell inner membrane. It catalyses the reaction N-terminal S-1,2-diacyl-sn-glyceryl-L-cysteinyl-[lipoprotein] + a glycerophospholipid = N-acyl-S-1,2-diacyl-sn-glyceryl-L-cysteinyl-[lipoprotein] + a 2-acyl-sn-glycero-3-phospholipid + H(+). It functions in the pathway protein modification; lipoprotein biosynthesis (N-acyl transfer). In terms of biological role, catalyzes the phospholipid dependent N-acylation of the N-terminal cysteine of apolipoprotein, the last step in lipoprotein maturation. This Pseudomonas aeruginosa (strain ATCC 15692 / DSM 22644 / CIP 104116 / JCM 14847 / LMG 12228 / 1C / PRS 101 / PAO1) protein is Apolipoprotein N-acyltransferase.